A 529-amino-acid polypeptide reads, in one-letter code: Probable cytochrome P450 6t1 (529 aa).

A heme-binding site is contributed by Cys472.

This sequence belongs to the cytochrome P450 family. Requires heme as cofactor.

Its subcellular location is the endoplasmic reticulum membrane. It localises to the microsome membrane. Functionally, may be involved in the metabolism of insect hormones and in the breakdown of synthetic insecticides. This Drosophila melanogaster (Fruit fly) protein is Probable cytochrome P450 6t1 (Cyp6t1).